Reading from the N-terminus, the 349-residue chain is tRNA pseudouridine synthase D (349 aa).

Phe-27 is a substrate binding site. The Nucleophile role is filled by Asp-80. Asn-129 serves as a coordination point for substrate. Positions 155–303 (GVPNYFGAQR…VEAARRAMLL (149 aa)) constitute a TRUD domain. Phe-329 is a substrate binding site.

Belongs to the pseudouridine synthase TruD family.

It carries out the reaction uridine(13) in tRNA = pseudouridine(13) in tRNA. Functionally, responsible for synthesis of pseudouridine from uracil-13 in transfer RNAs. The chain is tRNA pseudouridine synthase D from Shigella dysenteriae serotype 1 (strain Sd197).